A 289-amino-acid polypeptide reads, in one-letter code: ATP synthase mitochondrial F1 complex assembly factor 2 (289 aa).

Residues 1-40 constitute a mitochondrion transit peptide; it reads MWRSCLRLRDGGRRLLNRPAGGPSASMSPGPTIPSPARAY. The disordered stretch occupies residues 13 to 40; the sequence is RRLLNRPAGGPSASMSPGPTIPSPARAY. N6-succinyllysine is present on Lys133.

This sequence belongs to the ATP12 family. As to quaternary structure, interacts with ATP5F1B; involved in the assembly of the F1 component of the mitochondrial ATP synthase (ATPase). Interacts with FMC1. As to expression, widely expressed.

The protein localises to the mitochondrion inner membrane. Functionally, plays a role in the assembly of the F1 component of the mitochondrial ATP synthase (ATPase). The sequence is that of ATP synthase mitochondrial F1 complex assembly factor 2 from Homo sapiens (Human).